The chain runs to 773 residues: MVYHHHNHESRIIHCRKQLTSWRRRSLLLTIIVVTATVVSLISQEAEAHNQNAPPILYVRERNWRISETEKVGQIIDRVRAEDPDGDDLIFGIEPRFSLPGGENDASPPEKIPFQIDRETGVVTLNESLAGRAGQNFLIYITVTDGSYTAKNEVFINILGERENSSGYRPQTSISNVVHNISQFLPRFDQLPGVQSIRNGLPNSRPGGWYPPVPQNNIFGPPPFGNNYPPPPPNIPGVRGEQSGEEEQPDEEVTPTTPVRISSTTPKSRTKLTPITANNSTRVESAIPAETTTPSGGHHNNSSSPITIFSLKSGTIPIVVTVGGFFVAIAVLLAYLCRRRLCAISRTLKKTKEKEELAKKSNQSQLSSTLTDDSRNSMVMQQWQGPVAFANRYVPWERDQQMGIATSQLSTGVTNGGVSSPGVPSPGTGEPGSNLGPGCLTGGAGSSGAPENAFAGEANCDRWEFPRYRLKFFNILGEGAFGQVWRCEATNINGNEGITTVAVKTLKESATEVDRKDLLSELEVMKSLEPHINVVHLLGCCTDKDPTFVILEYVNRGKLQTYLRSSRAERHYGNTHGKSNVLTSCDLTSFMYQVAKGMDYLTSRGIIHRDLAARNILITDDHTCKVADFGFARDVITSKIYERKSEGKLPIRWMATESLYDNIFSVKSDIWSFGILMWEIVTLGSTPYPGISAADVMRKVRDGYRLEKPEHCRRELYNIMYYCWSHDPQERPLFAEIIQMLDKLLHTEMDYIELERFPDHNYYNIVSLSGEKL.

The first 48 residues, 1 to 48 (MVYHHHNHESRIIHCRKQLTSWRRRSLLLTIIVVTATVVSLISQEAEA), serve as a signal peptide directing secretion. Over 49 to 315 (HNQNAPPILY…ITIFSLKSGT (267 aa)) the chain is Extracellular. The Cadherin domain occupies 58-172 (YVRERNWRIS…ENSSGYRPQT (115 aa)). 3 N-linked (GlcNAc...) asparagine glycosylation sites follow: asparagine 126, asparagine 164, and asparagine 180. Residues 196 to 302 (SIRNGLPNSR…TPSGGHHNNS (107 aa)) are disordered. Residues 209–235 (WYPPVPQNNIFGPPPFGNNYPPPPPNI) show a composition bias toward pro residues. The segment covering 243–253 (SGEEEQPDEEV) has biased composition (acidic residues). 2 stretches are compositionally biased toward polar residues: residues 254–283 (TPTT…STRV) and 290–302 (ETTT…HNNS). N-linked (GlcNAc...) asparagine glycosylation is found at asparagine 278, asparagine 279, asparagine 300, and asparagine 301. A helical transmembrane segment spans residues 316–336 (IPIVVTVGGFFVAIAVLLAYL). The Cytoplasmic portion of the chain corresponds to 337–773 (CRRRLCAISR…NIVSLSGEKL (437 aa)). Disordered stretches follow at residues 352–373 (KEKE…LTDD) and 411–447 (TGVT…AGSS). Residues 361–373 (SNQSQLSSTLTDD) are compositionally biased toward polar residues. Low complexity predominate over residues 411 to 433 (TGVTNGGVSSPGVPSPGTGEPGS). Residues 470–749 (LKFFNILGEG…MLDKLLHTEM (280 aa)) enclose the Protein kinase domain. Residues 476 to 484 (LGEGAFGQV) and lysine 504 contribute to the ATP site. Residue aspartate 610 is the Proton acceptor of the active site.

It belongs to the protein kinase superfamily. Tyr protein kinase family. Fibroblast growth factor receptor subfamily.

It is found in the membrane. It carries out the reaction L-tyrosyl-[protein] + ATP = O-phospho-L-tyrosyl-[protein] + ADP + H(+). The polypeptide is Tyrosine kinase receptor Cad96Ca (Cad96Ca) (Drosophila melanogaster (Fruit fly)).